Consider the following 991-residue polypeptide: Translation initiation factor IF-2 (991 aa).

Disordered regions lie at residues 53-85 (SHGT…KART), 97-175 (VKRD…EAAE), and 312-395 (GIKG…DRGG). Basic and acidic residues-rich tracts occupy residues 97–113 (VKRD…HDSQ) and 125–175 (ELQR…EAAE). Low complexity predominate over residues 323–338 (AAGAPAPGAAPGAAAK). Positions 339 to 349 (PGEKKSVKSEK) are enriched in basic and acidic residues. The 168-residue stretch at 491–658 (PRPPVVTVMG…QVLLQAEVLE (168 aa)) folds into the tr-type G domain. The tract at residues 500 to 507 (GHVDHGKT) is G1. 500 to 507 (GHVDHGKT) serves as a coordination point for GTP. The segment at 525 to 529 (GITQH) is G2. The tract at residues 546-549 (DTPG) is G3. Residues 546–550 (DTPGH) and 600–603 (NKID) contribute to the GTP site. The tract at residues 600-603 (NKID) is G4. The segment at 636-638 (SAK) is G5.

It belongs to the TRAFAC class translation factor GTPase superfamily. Classic translation factor GTPase family. IF-2 subfamily.

Its subcellular location is the cytoplasm. In terms of biological role, one of the essential components for the initiation of protein synthesis. Protects formylmethionyl-tRNA from spontaneous hydrolysis and promotes its binding to the 30S ribosomal subunits. Also involved in the hydrolysis of GTP during the formation of the 70S ribosomal complex. The chain is Translation initiation factor IF-2 from Leptothrix cholodnii (strain ATCC 51168 / LMG 8142 / SP-6) (Leptothrix discophora (strain SP-6)).